Reading from the N-terminus, the 119-residue chain is MGLYFFPKEERLKKQEDFLRILREGKPYSLSKNFVVYIRKGAEKRRIGISVNKKVGKAVVRNKIKRLIREVYRLHRPYLKEDIEMLVIVKPGENIKNLDFHKVKEMLIKIWEKAGILKK.

This sequence belongs to the RnpA family. Consists of a catalytic RNA component (M1 or rnpB) and a protein subunit.

The enzyme catalyses Endonucleolytic cleavage of RNA, removing 5'-extranucleotides from tRNA precursor.. In terms of biological role, RNaseP catalyzes the removal of the 5'-leader sequence from pre-tRNA to produce the mature 5'-terminus. It can also cleave other RNA substrates such as 4.5S RNA. The protein component plays an auxiliary but essential role in vivo by binding to the 5'-leader sequence and broadening the substrate specificity of the ribozyme. This chain is Ribonuclease P protein component, found in Dictyoglomus turgidum (strain DSM 6724 / Z-1310).